Here is a 67-residue protein sequence, read N- to C-terminus: Probable tautomerase K2 (67 aa).

The active-site Proton acceptor; via imino nitrogen is proline 2.

Belongs to the 4-oxalocrotonate tautomerase family.

The protein is Probable tautomerase K2 of Dickeya dadantii (strain 3937) (Erwinia chrysanthemi (strain 3937)).